Reading from the N-terminus, the 591-residue chain is Lysyl oxidase homolog 1 (591 aa).

Positions 1-22 (MALALTGWQLVWGACVCVLVHG) are cleaved as a signal peptide. A propeptide spanning residues 23–91 (QQAPPGQGSD…PRRRGGLRRR (69 aa)) is cleaved from the precursor. Disordered stretches follow at residues 77-107 (APQAPPRRRGGLRRRQAPSLPLPGRVGSDTV) and 233-373 (EYGG…RLSV). Positions 82-92 (PRRRGGLRRRQ) are enriched in basic residues. A compositionally biased stretch (gly residues) spans 298–313 (NGGGGGGTYGGGGGDP). Positions 319–386 (PPYGNMPPEA…YRPNQNGRGL (68 aa)) are interaction with FBLN5. Positions 387–591 (PDLVPDPNYV…STTNCKIVQS (205 aa)) are lysyl-oxidase like. 5 disulfide bridges follow: C412–C418, C465–C514, C498–C504, C525–C535, and C572–C586. Cu cation contacts are provided by H466, H468, and H470. A cross-link (lysine tyrosylquinone (Lys-Tyr)) is located at residues 494 to 529 (KASFCLEDSTCDFGNLKRYACTSHTQGLSPGCYDTY). Y529 is modified (2',4',5'-topaquinone).

The protein belongs to the lysyl oxidase family. As to quaternary structure, interacts (via propeptide) with EFEMP2. Interacts with FBLN5. Requires Cu cation as cofactor. Lysine tyrosylquinone residue is required as a cofactor. The lysine tyrosylquinone cross-link (LTQ) is generated by condensation of the epsilon-amino group of a lysine with a topaquinone produced by oxidation of tyrosine. Post-translationally, proteolytic processing by a furin-like protease causes removal of N-terminal propeptide resulting in an enzyme largely inactive, but further proteolytic processing by BMP1 results in enzyme activation.

It is found in the secreted. Its subcellular location is the extracellular space. It localises to the extracellular matrix. It carries out the reaction L-lysyl-[protein] + O2 + H2O = (S)-2-amino-6-oxohexanoyl-[protein] + H2O2 + NH4(+). Functionally, catalyzes the oxidative deamination of lysine and hydroxylysine residues in collagen and elastin, resulting in the formation of covalent cross-linkages, and the stabilization of collagen and elastin fibers. Essential for the elastic fiber homeostasis and for their maintenance at adult age. This Bos taurus (Bovine) protein is Lysyl oxidase homolog 1 (LOXL1).